The primary structure comprises 188 residues: Ribosome-recycling factor (188 aa).

This sequence belongs to the RRF family.

It is found in the cytoplasm. In terms of biological role, responsible for the release of ribosomes from messenger RNA at the termination of protein biosynthesis. May increase the efficiency of translation by recycling ribosomes from one round of translation to another. The chain is Ribosome-recycling factor from Blochmanniella floridana.